Reading from the N-terminus, the 190-residue chain is MSFQLPQLPYAYNALEPHISKETLEFHHDKHHATYVNKLNGLVKGTEQEHKTLEELIKQKPTQAIYNNAAQAWNHAFYWKCMCGCGVKPSEQLIAKLTAAFGGLEEFKKKFTEKAVGHFGSGWCWLVEHDGKLEIIDTHDAVNPMTNGMKPLLTCDVWEHAYYIDTRNNRAAYLEHWWNVVNWKFVEEQL.

His27, His75, Asp156, and His160 together coordinate Fe cation.

This sequence belongs to the iron/manganese superoxide dismutase family. In terms of assembly, homodimer. Requires Fe cation as cofactor.

It catalyses the reaction 2 superoxide + 2 H(+) = H2O2 + O2. Its function is as follows. Destroys superoxide anion radicals which are normally produced within the cells and which are toxic to biological systems. This chain is Superoxide dismutase [Fe] (SODB), found in Entamoeba histolytica (strain ATCC 30459 / HM-1:IMSS / ABRM).